A 343-amino-acid chain; its full sequence is Apolipoprotein L6 (343 aa).

The span at 1-10 shows a compositional bias: basic and acidic residues; sequence MDNQAERESE. Positions 1–24 are disordered; that stretch reads MDNQAERESEAGVGLQRDEDDAPL.

This sequence belongs to the apolipoprotein L family. As to expression, widely expressed; highly expressed in the uterus, fetal brain and spinal cord, also detected in heart, liver, lung, colon, spleen, thymus, prostate, placenta, adrenal gland, salivary and mammary gland.

The protein resides in the cytoplasm. Its function is as follows. May affect the movement of lipids in the cytoplasm or allow the binding of lipids to organelles. In Homo sapiens (Human), this protein is Apolipoprotein L6 (APOL6).